We begin with the raw amino-acid sequence, 85 residues long: Makatoxin-2 (85 aa).

Positions 1 to 19 are cleaved as a signal peptide; it reads MNYLIVISFALLLMTSVES. One can recognise an LCN-type CS-alpha/beta domain in the interval 21–83; the sequence is RDAYIADSEN…VPIRIPGPCR (63 aa). Disulfide bonds link Cys-31-Cys-82, Cys-35-Cys-55, Cys-41-Cys-65, and Cys-45-Cys-67.

The protein belongs to the long (4 C-C) scorpion toxin superfamily. Sodium channel inhibitor family. Alpha subfamily. In terms of tissue distribution, expressed by the venom gland.

It localises to the secreted. In terms of biological role, this protein markedly relaxes the rat carbachol-precontracted anococcygeus muscle. This relaxation is inhibited by the inhibitor of nitric oxide (NO) synthase, N-nitro-L-arginine methyl ester (L-NAME), suggesting that the response induced by this protein is NO-mediated. The chain is Makatoxin-2 from Olivierus martensii (Manchurian scorpion).